We begin with the raw amino-acid sequence, 281 residues long: Probable endonuclease 4 (281 aa).

Residues His67, His107, Glu144, Asp178, His181, His215, Asp228, His230, and Glu260 each coordinate Zn(2+).

Belongs to the AP endonuclease 2 family. Zn(2+) serves as cofactor.

The enzyme catalyses Endonucleolytic cleavage to 5'-phosphooligonucleotide end-products.. Endonuclease IV plays a role in DNA repair. It cleaves phosphodiester bonds at apurinic or apyrimidinic (AP) sites, generating a 3'-hydroxyl group and a 5'-terminal sugar phosphate. In Methanocorpusculum labreanum (strain ATCC 43576 / DSM 4855 / Z), this protein is Probable endonuclease 4.